The sequence spans 264 residues: Small ribosomal subunit protein eS1 (264 aa).

Residue Lys34 is modified to N6-acetyllysine; alternate. A Glycyl lysine isopeptide (Lys-Gly) (interchain with G-Cter in SUMO2); alternate cross-link involves residue Lys34. N6-acetyllysine is present on Lys56. An ADP-ribosyltyrosine modification is found at Tyr155. Positions 232–264 are disordered; sequence HGEGGSSGKTTGDETGAKVERADGYEPPVQESV. Ser237 carries the post-translational modification Phosphoserine. Residues 242–255 show a composition bias toward basic and acidic residues; it reads TGDETGAKVERADG. The residue at position 249 (Lys249) is an N6-acetyllysine; alternate. Lys249 is covalently cross-linked (Glycyl lysine isopeptide (Lys-Gly) (interchain with G-Cter in SUMO2); alternate). Phosphotyrosine is present on Tyr256. Ser263 carries the post-translational modification Phosphoserine.

Belongs to the eukaryotic ribosomal protein eS1 family. In terms of assembly, component of the small ribosomal subunit. Mature ribosomes consist of a small (40S) and a large (60S) subunit. The 40S subunit contains about 33 different proteins and 1 molecule of RNA (18S). The 60S subunit contains about 49 different proteins and 3 molecules of RNA (28S, 5.8S and 5S). Identified in a IGF2BP1-dependent mRNP granule complex containing untranslated mRNAs. Binds with high affinity to IPO4. Interacts with DDIT3. Part of the small subunit (SSU) processome, composed of more than 70 proteins and the RNA chaperone small nucleolar RNA (snoRNA) U3. In terms of processing, the protein designated S3b has the same amino acid sequence as S3a except that it lacks the C-terminal 12 residues. It is probable that S3a is converted by proteolysis, either physiologically or fortuitously, to S3b. ADP-ribosylated at Tyr-155 by PARP1 in presence of HPF1.

Its subcellular location is the cytoplasm. It localises to the nucleus. The protein localises to the nucleolus. In terms of biological role, component of the small ribosomal subunit. The ribosome is a large ribonucleoprotein complex responsible for the synthesis of proteins in the cell. Part of the small subunit (SSU) processome, first precursor of the small eukaryotic ribosomal subunit. During the assembly of the SSU processome in the nucleolus, many ribosome biogenesis factors, an RNA chaperone and ribosomal proteins associate with the nascent pre-rRNA and work in concert to generate RNA folding, modifications, rearrangements and cleavage as well as targeted degradation of pre-ribosomal RNA by the RNA exosome. May play a role during erythropoiesis through regulation of transcription factor DDIT3. This chain is Small ribosomal subunit protein eS1 (Rps3a), found in Rattus norvegicus (Rat).